The sequence spans 820 residues: DNA mismatch repair protein MutS (820 aa).

615–622 contributes to the ATP binding site; it reads GPNMAGKS.

This sequence belongs to the DNA mismatch repair MutS family.

In terms of biological role, this protein is involved in the repair of mismatches in DNA. It is possible that it carries out the mismatch recognition step. This protein has a weak ATPase activity. The polypeptide is DNA mismatch repair protein MutS (Anaplasma phagocytophilum (strain HZ)).